A 1115-amino-acid chain; its full sequence is DNA-directed RNA polymerase subunit beta (1115 aa).

The tract at residues 1084–1115 is disordered; the sequence is HEAGEGEDDEYFEEDEEAVDDEPMTFDDDDME. The segment covering 1088 to 1115 has biased composition (acidic residues); it reads EGEDDEYFEEDEEAVDDEPMTFDDDDME.

This sequence belongs to the RNA polymerase beta chain family. As to quaternary structure, the RNAP catalytic core consists of 2 alpha, 1 beta, 1 beta' and 1 omega subunit. When a sigma factor is associated with the core the holoenzyme is formed, which can initiate transcription.

The enzyme catalyses RNA(n) + a ribonucleoside 5'-triphosphate = RNA(n+1) + diphosphate. DNA-dependent RNA polymerase catalyzes the transcription of DNA into RNA using the four ribonucleoside triphosphates as substrates. The sequence is that of DNA-directed RNA polymerase subunit beta from Desulfitobacterium hafniense (strain Y51).